A 502-amino-acid polypeptide reads, in one-letter code: Large ribosomal subunit protein uL2m (502 aa).

The segment at Ala-458 to Ile-502 is disordered. Residues Asp-463–Thr-473 are compositionally biased toward basic and acidic residues. The span at Ala-493–Ile-502 shows a compositional bias: gly residues.

It belongs to the universal ribosomal protein uL2 family.

It is found in the mitochondrion. This chain is Large ribosomal subunit protein uL2m (RPL2), found in Oryza sativa (Rice).